The primary structure comprises 113 residues: Protein PucD (113 aa).

Its function is as follows. Seems to be required for the LH-II stabilization. The protein is Protein PucD (pucD) of Rhodobacter capsulatus (Rhodopseudomonas capsulata).